The primary structure comprises 70 residues: Sec-independent protein translocase protein TatA (70 aa).

Residues 1–21 traverse the membrane as a helical segment; the sequence is MGSFSVWHWLIVLVIVLVLFG. The tract at residues 42–70 is disordered; that stretch reads GMADEDQTPPPADANANAKTVDHKADEIK. The segment covering 61–70 has biased composition (basic and acidic residues); the sequence is TVDHKADEIK.

This sequence belongs to the TatA/E family. In terms of assembly, the Tat system comprises two distinct complexes: a TatABC complex, containing multiple copies of TatA, TatB and TatC subunits, and a separate TatA complex, containing only TatA subunits. Substrates initially bind to the TatABC complex, which probably triggers association of the separate TatA complex to form the active translocon.

It localises to the cell inner membrane. In terms of biological role, part of the twin-arginine translocation (Tat) system that transports large folded proteins containing a characteristic twin-arginine motif in their signal peptide across membranes. TatA could form the protein-conducting channel of the Tat system. The polypeptide is Sec-independent protein translocase protein TatA (Agrobacterium fabrum (strain C58 / ATCC 33970) (Agrobacterium tumefaciens (strain C58))).